The primary structure comprises 203 residues: ATP-dependent Clp protease proteolytic subunit 1 (203 aa).

S103 serves as the catalytic Nucleophile. H128 is a catalytic residue.

This sequence belongs to the peptidase S14 family. As to quaternary structure, fourteen ClpP subunits assemble into 2 heptameric rings which stack back to back to give a disk-like structure with a central cavity, resembling the structure of eukaryotic proteasomes.

The protein localises to the cytoplasm. The enzyme catalyses Hydrolysis of proteins to small peptides in the presence of ATP and magnesium. alpha-casein is the usual test substrate. In the absence of ATP, only oligopeptides shorter than five residues are hydrolyzed (such as succinyl-Leu-Tyr-|-NHMec, and Leu-Tyr-Leu-|-Tyr-Trp, in which cleavage of the -Tyr-|-Leu- and -Tyr-|-Trp bonds also occurs).. Its function is as follows. Cleaves peptides in various proteins in a process that requires ATP hydrolysis. Has a chymotrypsin-like activity. Plays a major role in the degradation of misfolded proteins. The protein is ATP-dependent Clp protease proteolytic subunit 1 of Treponema pallidum (strain Nichols).